We begin with the raw amino-acid sequence, 337 residues long: Mycothiol acetyltransferase (337 aa).

N-acetyltransferase domains follow at residues 11-151 and 154-337; these read LDER…FELP and VRLR…MYRK. Glu-37 contacts 1D-myo-inositol 2-(L-cysteinylamino)-2-deoxy-alpha-D-glucopyranoside. An acetyl-CoA-binding site is contributed by 81–83; the sequence is LVI. A 1D-myo-inositol 2-(L-cysteinylamino)-2-deoxy-alpha-D-glucopyranoside-binding site is contributed by Glu-182. Residues 210-246 are disordered; the sequence is RPTGSGDGDVADGGSTDGGPADSGSADGGAGEGGTGD. Positions 221–234 are enriched in low complexity; sequence DGGSTDGGPADSGS. Gly residues predominate over residues 235-246; that stretch reads ADGGAGEGGTGD. Positions 257 and 271 each coordinate 1D-myo-inositol 2-(L-cysteinylamino)-2-deoxy-alpha-D-glucopyranoside. Acetyl-CoA contacts are provided by residues 275-277 and 282-288; these read VGV and QGGGLGR. Tyr-309 lines the 1D-myo-inositol 2-(L-cysteinylamino)-2-deoxy-alpha-D-glucopyranoside pocket. Residue 314 to 319 participates in acetyl-CoA binding; that stretch reads NTAAIR.

This sequence belongs to the acetyltransferase family. MshD subfamily. As to quaternary structure, monomer.

It catalyses the reaction 1D-myo-inositol 2-(L-cysteinylamino)-2-deoxy-alpha-D-glucopyranoside + acetyl-CoA = mycothiol + CoA + H(+). In terms of biological role, catalyzes the transfer of acetyl from acetyl-CoA to desacetylmycothiol (Cys-GlcN-Ins) to form mycothiol. The sequence is that of Mycothiol acetyltransferase from Streptosporangium roseum (strain ATCC 12428 / DSM 43021 / JCM 3005 / KCTC 9067 / NCIMB 10171 / NRRL 2505 / NI 9100).